The chain runs to 309 residues: Type II methyltransferase M.HindIII (309 aa).

This sequence belongs to the N(4)/N(6)-methyltransferase family.

The catalysed reaction is a 2'-deoxyadenosine in DNA + S-adenosyl-L-methionine = an N(6)-methyl-2'-deoxyadenosine in DNA + S-adenosyl-L-homocysteine + H(+). In terms of biological role, a beta subtype methylase that recognizes the double-stranded sequence 5'-AAGCTT-3', methylates A-1 on both strands, and protects the DNA from cleavage by the HindIII endonuclease. The chain is Type II methyltransferase M.HindIII from Haemophilus influenzae (strain ATCC 51907 / DSM 11121 / KW20 / Rd).